Consider the following 122-residue polypeptide: Large ribosomal subunit protein uL14 (122 aa).

Belongs to the universal ribosomal protein uL14 family. Part of the 50S ribosomal subunit. Forms a cluster with proteins L3 and L19. In the 70S ribosome, L14 and L19 interact and together make contacts with the 16S rRNA in bridges B5 and B8.

Binds to 23S rRNA. Forms part of two intersubunit bridges in the 70S ribosome. The chain is Large ribosomal subunit protein uL14 from Streptomyces coelicolor (strain ATCC BAA-471 / A3(2) / M145).